The sequence spans 61 residues: Photosystem II reaction center protein K (61 aa).

Residues 1–24 (MLNIFSLICICINSALHSSSFFFA) constitute a propeptide that is removed on maturation. The chain crosses the membrane as a helical span at residues 40-60 (MPVIPVLFFLLALVWQAAVSF).

The protein belongs to the PsbK family. As to quaternary structure, PSII is composed of 1 copy each of membrane proteins PsbA, PsbB, PsbC, PsbD, PsbE, PsbF, PsbH, PsbI, PsbJ, PsbK, PsbL, PsbM, PsbT, PsbX, PsbY, PsbZ, Psb30/Ycf12, at least 3 peripheral proteins of the oxygen-evolving complex and a large number of cofactors. It forms dimeric complexes.

The protein localises to the plastid. It is found in the chloroplast thylakoid membrane. Its function is as follows. One of the components of the core complex of photosystem II (PSII). PSII is a light-driven water:plastoquinone oxidoreductase that uses light energy to abstract electrons from H(2)O, generating O(2) and a proton gradient subsequently used for ATP formation. It consists of a core antenna complex that captures photons, and an electron transfer chain that converts photonic excitation into a charge separation. This chain is Photosystem II reaction center protein K, found in Liriodendron tulipifera (Tuliptree).